The following is a 171-amino-acid chain: Putative RING finger protein 027R (171 aa).

An RING-type zinc finger spans residues 121 to 163 (CAVCMTNPVWVDFVWSCKHISTCIKCLKMLSRGSNGFKCPICR).

The protein belongs to the IIV-6 157L family.

This chain is Putative RING finger protein 027R, found in Aedes vexans (Inland floodwater mosquito).